The chain runs to 327 residues: Phenylalanine--tRNA ligase alpha subunit (327 aa).

Glu-252 contributes to the Mg(2+) binding site.

The protein belongs to the class-II aminoacyl-tRNA synthetase family. Phe-tRNA synthetase alpha subunit type 1 subfamily. As to quaternary structure, tetramer of two alpha and two beta subunits. Requires Mg(2+) as cofactor.

It is found in the cytoplasm. It carries out the reaction tRNA(Phe) + L-phenylalanine + ATP = L-phenylalanyl-tRNA(Phe) + AMP + diphosphate + H(+). In Tolumonas auensis (strain DSM 9187 / NBRC 110442 / TA 4), this protein is Phenylalanine--tRNA ligase alpha subunit.